Here is a 149-residue protein sequence, read N- to C-terminus: Putative glycine cleavage system H protein 3 (149 aa).

Residues 39-121 (TCTLGITKYA…EDKGWLIKME (83 aa)) form the Lipoyl-binding domain. At Lys80 the chain carries N6-lipoyllysine.

This sequence belongs to the GcvH family. As to quaternary structure, the glycine cleavage system is composed of four proteins: P, T, L and H. The cofactor is (R)-lipoate.

In terms of biological role, the glycine cleavage system catalyzes the degradation of glycine. The H protein shuttles the methylamine group of glycine from the P protein to the T protein. The sequence is that of Putative glycine cleavage system H protein 3 (gcvH3) from Dictyostelium discoideum (Social amoeba).